The chain runs to 260 residues: 14-3-3 protein 4 (260 aa).

Residues 238–260 (DNADDVGDDIKEASKPESGEGQQ) form a disordered region. The span at 245 to 260 (DDIKEASKPESGEGQQ) shows a compositional bias: basic and acidic residues.

This sequence belongs to the 14-3-3 family. In terms of assembly, homodimer.

This Solanum lycopersicum (Tomato) protein is 14-3-3 protein 4 (TFT4).